Consider the following 86-residue polypeptide: U13-theraphotoxin-Cg1b (86 aa).

Positions 1 to 21 (MKVSVLITLAVLGVMFVWASA) are cleaved as a signal peptide. Residues 22–51 (AELEQSGSDQKDSPAWLKSMERIFQSEERE) constitute a propeptide that is removed on maturation. Cystine bridges form between cysteine 52–cysteine 66, cysteine 59–cysteine 71, and cysteine 65–cysteine 78.

It belongs to the neurotoxin 10 (Hwtx-1) family. 41 (Jztx-36) subfamily. As to expression, expressed by the venom gland.

The protein localises to the secreted. Probable ion channel inhibitor. In Chilobrachys guangxiensis (Chinese earth tiger tarantula), this protein is U13-theraphotoxin-Cg1b.